A 220-amino-acid polypeptide reads, in one-letter code: Thiamine-phosphate synthase (220 aa).

4-amino-2-methyl-5-(diphosphooxymethyl)pyrimidine contacts are provided by residues glutamine 46 to lysine 50 and asparagine 83. Positions 84 and 103 each coordinate Mg(2+). A 4-amino-2-methyl-5-(diphosphooxymethyl)pyrimidine-binding site is contributed by serine 122. Threonine 149–serine 151 provides a ligand contact to 2-[(2R,5Z)-2-carboxy-4-methylthiazol-5(2H)-ylidene]ethyl phosphate. Residue lysine 152 coordinates 4-amino-2-methyl-5-(diphosphooxymethyl)pyrimidine. 2-[(2R,5Z)-2-carboxy-4-methylthiazol-5(2H)-ylidene]ethyl phosphate-binding positions include glycine 181 and isoleucine 201 to serine 202.

This sequence belongs to the thiamine-phosphate synthase family. Mg(2+) serves as cofactor.

The enzyme catalyses 2-[(2R,5Z)-2-carboxy-4-methylthiazol-5(2H)-ylidene]ethyl phosphate + 4-amino-2-methyl-5-(diphosphooxymethyl)pyrimidine + 2 H(+) = thiamine phosphate + CO2 + diphosphate. It carries out the reaction 2-(2-carboxy-4-methylthiazol-5-yl)ethyl phosphate + 4-amino-2-methyl-5-(diphosphooxymethyl)pyrimidine + 2 H(+) = thiamine phosphate + CO2 + diphosphate. The catalysed reaction is 4-methyl-5-(2-phosphooxyethyl)-thiazole + 4-amino-2-methyl-5-(diphosphooxymethyl)pyrimidine + H(+) = thiamine phosphate + diphosphate. It participates in cofactor biosynthesis; thiamine diphosphate biosynthesis; thiamine phosphate from 4-amino-2-methyl-5-diphosphomethylpyrimidine and 4-methyl-5-(2-phosphoethyl)-thiazole: step 1/1. Functionally, condenses 4-methyl-5-(beta-hydroxyethyl)thiazole monophosphate (THZ-P) and 2-methyl-4-amino-5-hydroxymethyl pyrimidine pyrophosphate (HMP-PP) to form thiamine monophosphate (TMP). This chain is Thiamine-phosphate synthase, found in Mannheimia succiniciproducens (strain KCTC 0769BP / MBEL55E).